The primary structure comprises 199 residues: MLYPTPIAKLIESFTKLPGIGIKTATRLAFYTIGMSDEDVNNFAKNLLAAKRELTYCSVCGNLTDDDPCNICTDESRDRSTVLVVEDSKDVSAMEKIQEYHGLYHVLHGLISPMNGIGPDDINLKSLLTRLRDNSDIHEVIIATNATADGEATAMYISRVLKPAGITVTRLARGLAVGSDIEYADEVTLLRAIENRTEL.

A C4-type zinc finger spans residues 57-72 (CSVCGNLTDDDPCNIC). The 97-residue stretch at 80–176 (STVLVVEDSK…TVTRLARGLA (97 aa)) folds into the Toprim domain.

Belongs to the RecR family.

Its function is as follows. May play a role in DNA repair. It seems to be involved in an RecBC-independent recombinational process of DNA repair. It may act with RecF and RecO. In Streptococcus mutans serotype c (strain ATCC 700610 / UA159), this protein is Recombination protein RecR.